Consider the following 511-residue polypeptide: 2,3-bisphosphoglycerate-independent phosphoglycerate mutase (511 aa).

The Mn(2+) site is built by D12 and S62. The Phosphoserine intermediate role is filled by S62. Substrate-binding positions include H123, 153 to 154 (RD), R185, R191, 260 to 263 (RPDR), and K333. Residues D400, H404, D441, H442, and H460 each coordinate Mn(2+).

The protein belongs to the BPG-independent phosphoglycerate mutase family. Monomer. Requires Mn(2+) as cofactor.

It carries out the reaction (2R)-2-phosphoglycerate = (2R)-3-phosphoglycerate. The protein operates within carbohydrate degradation; glycolysis; pyruvate from D-glyceraldehyde 3-phosphate: step 3/5. In terms of biological role, catalyzes the interconversion of 2-phosphoglycerate and 3-phosphoglycerate. The chain is 2,3-bisphosphoglycerate-independent phosphoglycerate mutase from Clostridium novyi (strain NT).